Reading from the N-terminus, the 567-residue chain is Interleukin-1 receptor-like 1 (567 aa).

A signal peptide spans 1–26; the sequence is MIDRQRMGLWALAILTLPMYLTVTEG. Ig-like C2-type domains are found at residues 27 to 109 and 120 to 203; these read SKSS…LNVT and PDYL…VTAT. Residues 27–332 are Extracellular-facing; it reads SKSSWGLENE…LRRKQPIDHR (306 aa). C42 and C93 are disulfide-bonded. N-linked (GlcNAc...) asparagine glycans are attached at residues N60, N101, N107, N146, N176, and N194. 2 cysteine pairs are disulfide-bonded: C117-C157 and C139-C187. Positions 204 to 216 are flexible linker; it reads RSFTVEEKGFSMF. Residues 217–324 form the Ig-like C2-type 3 domain; the sequence is PVITNPPYNH…GMIRHTIRLR (108 aa). N-linked (GlcNAc...) asparagine glycans are attached at residues N225, N259, and N278. 2 disulfides stabilise this stretch: C240-C308 and C243-C287. K326 is covalently cross-linked (Glycyl lysine isopeptide (Lys-Gly) (interchain with G-Cter in ubiquitin)). A helical transmembrane segment spans residues 333-355; it reads SIYYIVAGCSLLLMFINVLVIVL. At 356–567 the chain is on the cytoplasmic side; the sequence is KVFWIEVALF…GKACLDLKHF (212 aa). The 161-residue stretch at 380-540 folds into the TIR domain; sequence KLYDAYIIYP…KFWKHVRYQM (161 aa). Position 442 is a phosphoserine; by GSK3-beta (S442). E466 is a catalytic residue.

Belongs to the interleukin-1 receptor family. Interacts with MYD88, IRAK1, IRAK4, and TRAF6. Bound to its ligand IL33, interacts with IL1RAP to form the minimal interleukin-33 signaling complex with a 1:1:1 stoichiometry. Interacts with KIT (bound to KITLG/SCF). A mast cell-specific KITLG/SCF-induced interleukin-33 signaling complex contains IL1RL1, IL1RAP, KIT and MYD88. Interacts with TMED1. In terms of processing, phosphorylated by GSK3B at Ser-442; leading to proteasomal degradation. Post-translationally, ubiquitinated at Lys-326 in a FBXL19-mediated manner; leading to proteasomal degradation. Ubiquitination by TRAF6 via 'Lys-27'-linked polyubiquitination and deubiquitination by USP38 serves as a critical regulatory mechanism for fine-tuning IL1RL1-mediated inflammatory response. As to expression, predominantly expressed in hematopoietic tissues, and in macrophage, erythroid, epithelial and fibroblast cell lines. Isoform A is expressed in brain astrocytes and microglia. Isoform B is expressed in brain endothelial cells.

It localises to the cell membrane. Its subcellular location is the secreted. The catalysed reaction is NAD(+) + H2O = ADP-D-ribose + nicotinamide + H(+). Functionally, receptor for interleukin-33 (IL-33) which plays crucial roles in innate and adaptive immunity, contributing to tissue homeostasis and responses to environmental stresses together with coreceptor IL1RAP. Its stimulation recruits MYD88, IRAK1, IRAK4, and TRAF6, followed by phosphorylation of MAPK3/ERK1 and/or MAPK1/ERK2, MAPK14, and MAPK8. Possibly involved in helper T-cell function. Upon tissue injury, induces UCP2-dependent mitochondrial rewiring that attenuates the generation of reactive oxygen species and preserves the integrity of Krebs cycle required for persistent production of itaconate and subsequent GATA3-dependent differentiation of inflammation-resolving alternatively activated macrophages. Inhibits IL-33 signaling. The polypeptide is Interleukin-1 receptor-like 1 (Il1rl1) (Mus musculus (Mouse)).